The primary structure comprises 384 residues: Deoxyguanosinetriphosphate triphosphohydrolase-like protein (384 aa).

The disordered stretch occupies residues 12–39 (ELASYASDPSKTRGRRHSEPPPENRTEF). Residues 28 to 39 (HSEPPPENRTEF) show a composition bias toward basic and acidic residues. Residues 73–208 (RLTHSLEVAQ…ANLADEVAYN (136 aa)) form the HD domain.

This sequence belongs to the dGTPase family. Type 2 subfamily.

The protein is Deoxyguanosinetriphosphate triphosphohydrolase-like protein of Bordetella parapertussis (strain 12822 / ATCC BAA-587 / NCTC 13253).